Here is a 306-residue protein sequence, read N- to C-terminus: Ribonuclease H2 subunit B (306 aa).

The interval 232 to 285 (LPDLSSPTPEPPVKKRKVSEAPVEAEEDYTKFNSDSKNKKSNSKMTAAQKSLAK) is disordered. Residues 259–269 (DYTKFNSDSKN) are compositionally biased toward basic and acidic residues.

Belongs to the RNase H2 subunit B family. As to quaternary structure, the RNase H2 complex is a heterotrimer composed of the catalytic subunit rnaseh2a and the non-catalytic subunits rnaseh2b and rnaseh2c.

It localises to the nucleus. Its function is as follows. Non catalytic subunit of RNase H2, an endonuclease that specifically degrades the RNA of RNA:DNA hybrids. Participates in DNA replication, possibly by mediating the removal of lagging-strand Okazaki fragment RNA primers during DNA replication. Mediates the excision of single ribonucleotides from DNA:RNA duplexes. The polypeptide is Ribonuclease H2 subunit B (rnaseh2b) (Xenopus tropicalis (Western clawed frog)).